The primary structure comprises 431 residues: Glucose-1-phosphate adenylyltransferase (431 aa).

Beta-D-fructose 1,6-bisphosphate is bound at residue lysine 39. Arginine 40, histidine 46, and arginine 52 together coordinate AMP. Tyrosine 114 contacts alpha-D-glucose 1-phosphate. AMP is bound at residue arginine 130. Alpha-D-glucose 1-phosphate-binding positions include glycine 179, 194–195 (EK), and serine 212. Arginine 386 lines the AMP pocket. 429-431 (QER) is a beta-D-fructose 1,6-bisphosphate binding site.

It belongs to the bacterial/plant glucose-1-phosphate adenylyltransferase family. Homotetramer.

It catalyses the reaction alpha-D-glucose 1-phosphate + ATP + H(+) = ADP-alpha-D-glucose + diphosphate. It functions in the pathway glycan biosynthesis; glycogen biosynthesis. With respect to regulation, allosterically activated by fructose-1,6-bisphosphate (F16BP) and inhibited by AMP. In terms of biological role, involved in the biosynthesis of ADP-glucose, a building block required for the elongation reactions to produce glycogen. Catalyzes the reaction between ATP and alpha-D-glucose 1-phosphate (G1P) to produce pyrophosphate and ADP-Glc. This is Glucose-1-phosphate adenylyltransferase from Klebsiella pneumoniae subsp. pneumoniae (strain ATCC 700721 / MGH 78578).